A 595-amino-acid chain; its full sequence is Anthranilate synthase alpha subunit 1, chloroplastic (595 aa).

The transit peptide at 1–54 directs the protein to the chloroplast; the sequence is MSSSMNVATMQALTFSRRLLPSVASRYLSSSSVTVTGYSGRSSAYAPSFRSIKC. Valine 55 carries the N-acetylvaline modification. Residues serine 115 and 356-358 contribute to the L-tryptophan site; that span reads PYM. 391-392 is a binding site for chorismate; the sequence is GT. Glutamate 418 is a Mg(2+) binding site. Residues tyrosine 506, arginine 526, 558-560, and glycine 560 each bind chorismate; that span reads GAG. Residue glutamate 573 coordinates Mg(2+).

This sequence belongs to the anthranilate synthase component I family. In terms of assembly, heterotetramer consisting of two non-identical subunits: a beta subunit and a large alpha subunit. Requires Mg(2+) as cofactor. As to expression, expressed in the central cylinder of mature primary root zones, including pericycle and early lateral root primordia, and vasculature of cotyledons.

It localises to the plastid. The protein resides in the chloroplast. The enzyme catalyses chorismate + L-glutamine = anthranilate + pyruvate + L-glutamate + H(+). The protein operates within amino-acid biosynthesis; L-tryptophan biosynthesis; L-tryptophan from chorismate: step 1/5. Feedback inhibition by tryptophan. Part of a heterotetrameric complex that catalyzes the two-step biosynthesis of anthranilate, an intermediate in the biosynthesis of L-tryptophan. In the first step, the glutamine-binding beta subunit of anthranilate synthase (AS) provides the glutamine amidotransferase activity which generates ammonia as a substrate that, along with chorismate, is used in the second step, catalyzed by the large alpha subunit of AS to produce anthranilate. Plays an important regulatory role in auxin production via the tryptophan-dependent biosynthetic pathway. This chain is Anthranilate synthase alpha subunit 1, chloroplastic (ASA1), found in Arabidopsis thaliana (Mouse-ear cress).